A 131-amino-acid chain; its full sequence is Small ribosomal subunit protein bS6 (131 aa).

Residues 98–131 are disordered; sequence EASPMVKAKDERRERRDDFANETADDAEAGDSEE. Residues 104–116 are compositionally biased toward basic and acidic residues; the sequence is KAKDERRERRDDF. A compositionally biased stretch (acidic residues) spans 120–131; the sequence is TADDAEAGDSEE.

This sequence belongs to the bacterial ribosomal protein bS6 family.

In terms of biological role, binds together with bS18 to 16S ribosomal RNA. In Cronobacter sakazakii (strain ATCC BAA-894) (Enterobacter sakazakii), this protein is Small ribosomal subunit protein bS6.